The following is a 382-amino-acid chain: Pregnancy-associated glycoprotein 1 (382 aa).

A signal peptide spans Met-1–Cys-15. Residues Ile-16–Phe-53 constitute a propeptide, activation peptide. Asn-57 and Asn-74 each carry an N-linked (GlcNAc...) asparagine glycan. Residues Tyr-71–Ala-379 form the Peptidase A1 domain. An intrachain disulfide couples Cys-102 to Cys-110. The N-linked (GlcNAc...) asparagine glycan is linked to Asn-128. Disulfide bonds link Cys-263–Cys-267 and Cys-305–Cys-339.

The protein belongs to the peptidase A1 family. As to expression, trophoblast and placental tissue. Produced specifically in the invasive binucleate cells of the placenta.

The protein localises to the secreted. The protein resides in the extracellular space. Its function is as follows. Has no proteolytic activity. The chain is Pregnancy-associated glycoprotein 1 from Ovis aries (Sheep).